A 1619-amino-acid polypeptide reads, in one-letter code: ATP-dependent helicase ULS1 (1619 aa).

The short motif at 7–10 is the SUMO interacting motif; type a 1 element; that stretch reads IDLT. The segment covering 86-102 has biased composition (polar residues); sequence STFNNEKSSNEVKQQQV. 4 disordered regions span residues 86–123, 200–279, 347–371, and 429–450; these read STFN…SSPS, NNKP…VESS, PILP…NSSI, and SGSN…SVLQ. Residues 103 to 118 show a composition bias toward basic and acidic residues; that stretch reads LKEETMGSSNDEKKTQ. The residue at position 121 (Ser-121) is a Phosphoserine. Positions 200-210 are enriched in polar residues; it reads NNKPSQQQFSD. Residues 211 to 226 show a composition bias toward basic and acidic residues; it reads PETKDNSLKSENKDQI. Polar residues-rich tracts occupy residues 242–259 and 269–279; these read SAFQ…TIPN and LPSNLSSVESS. Residues 353-366 show a composition bias toward basic and acidic residues; the sequence is NMDHTTHNSHDSEQ. The SUMO interacting motif; type b 1 motif lies at 371-378; sequence IIILSDED. An SUMO interacting motif; type a 2 motif is present at residues 470–473; sequence LDTL. The SUMO interacting motif; type b 2 signature appears at 543–550; it reads ILVDEAEN. The Helicase ATP-binding domain maps to 956–1157; it reads QVENSAKKGG…YSLIRFLRIP (202 aa). 969-976 is a binding site for ATP; sequence DDMGLGKT. The RING-type zinc-finger motif lies at 1330-1386; the sequence is CFWCMEQLEPEAMSVLTGCGHLICDTCIEPFIEESSMLPQAKKTKGGAFAIPCKDCQ. One can recognise a Helicase C-terminal domain in the interval 1447 to 1606; the sequence is QCIQVIQRVF…GKIKEVNSLG (160 aa).

It belongs to the SNF2/RAD54 helicase family. As to quaternary structure, interacts with CDC3, CDC11, EBP2, SIR4, UBC4 and SUMO/SMT3.

Its subcellular location is the nucleus. Its function is as follows. ATP-dependent helicase involved mating type switching and in silencing interference through its interaction with the silencing regulator SIR4. Cooperates with UBC4 and UBC5 to mediate ubiquitination of SUMO conjugates. This chain is ATP-dependent helicase ULS1 (ULS1), found in Saccharomyces cerevisiae (strain ATCC 204508 / S288c) (Baker's yeast).